Here is a 497-residue protein sequence, read N- to C-terminus: Glycerol kinase (497 aa).

Residue T12 coordinates ADP. T12, T13, and S14 together coordinate ATP. T12 is a binding site for sn-glycerol 3-phosphate. Position 16 (R16) interacts with ADP. Positions 82, 83, 132, and 239 each coordinate sn-glycerol 3-phosphate. Positions 82, 83, 132, 239, and 240 each coordinate glycerol. Positions 261 and 303 each coordinate ADP. 4 residues coordinate ATP: T261, G303, Q307, and G402. G402 and N406 together coordinate ADP.

This sequence belongs to the FGGY kinase family. In terms of assembly, homodimer.

The enzyme catalyses glycerol + ATP = sn-glycerol 3-phosphate + ADP + H(+). The protein operates within polyol metabolism; glycerol degradation via glycerol kinase pathway; sn-glycerol 3-phosphate from glycerol: step 1/1. Functionally, key enzyme in the regulation of glycerol uptake and metabolism. Catalyzes the phosphorylation of glycerol to yield sn-glycerol 3-phosphate. Can utilize other nucleoside triphosphates (GTP, CTP, UTP and ITP) as a phosphoryl donor. The polypeptide is Glycerol kinase (Thermococcus kodakarensis (strain ATCC BAA-918 / JCM 12380 / KOD1) (Pyrococcus kodakaraensis (strain KOD1))).